Consider the following 239-residue polypeptide: Phosphoribosylaminoimidazole-succinocarboxamide synthase (239 aa).

This sequence belongs to the SAICAR synthetase family.

The catalysed reaction is 5-amino-1-(5-phospho-D-ribosyl)imidazole-4-carboxylate + L-aspartate + ATP = (2S)-2-[5-amino-1-(5-phospho-beta-D-ribosyl)imidazole-4-carboxamido]succinate + ADP + phosphate + 2 H(+). Its pathway is purine metabolism; IMP biosynthesis via de novo pathway; 5-amino-1-(5-phospho-D-ribosyl)imidazole-4-carboxamide from 5-amino-1-(5-phospho-D-ribosyl)imidazole-4-carboxylate: step 1/2. The chain is Phosphoribosylaminoimidazole-succinocarboxamide synthase from Nitratiruptor sp. (strain SB155-2).